A 76-amino-acid chain; its full sequence is Antimicrobial peptide lumbricin-1 (76 aa).

Positions 1-14 (MSLCISDYLYLTLT) are cleaved as a propeptide — removed in mature form.

In terms of biological role, displays antimicrobial activity against the Gram-positive bacteria B.subtilis ATCC 62037, S.aureus ATCC 15752 and S.mutans ATCC 25175, the Gram-negative bacteria E.coli ATCC 27325, P.putida ATCC 17426 and Serratia sp. ATCC 21074, and the fungi C.albicans ATCC 10231, C.neoformans ATCC 34881 and S.cerevisiae ATCC 44774. Does not possess hemolytic activity. The protein is Antimicrobial peptide lumbricin-1 of Lumbricus rubellus (Humus earthworm).